We begin with the raw amino-acid sequence, 447 residues long: Multicopper oxidase mco (447 aa).

The segment covering 1–25 (MMDMKENDQKRNDMMDMKSHDERKN) has biased composition (basic and acidic residues). The segment at 1–43 (MMDMKENDQKRNDMMDMKSHDERKNLNSSQGKNEITFPKVLDP) is disordered. His-107, His-109, His-147, His-149, His-375, His-378, His-380, His-428, Cys-429, His-430, His-434, and Met-439 together coordinate Cu cation.

It belongs to the multicopper oxidase family. Cu cation serves as cofactor.

The protein localises to the cytoplasm. May be involved in copper homeostasis and oxidative stress response. Oxidizes the substrate 3,3'-dimethoxybenzidine in vitro. Also possesses low levels of phenoloxidase and ferroxidase activities. The chain is Multicopper oxidase mco (mco) from Staphylococcus aureus.